A 456-amino-acid polypeptide reads, in one-letter code: Bifunctional protein GlmU (456 aa).

The interval 1-229 is pyrophosphorylase; the sequence is MLNSAMSVVI…LSEVEGVNNR (229 aa). UDP-N-acetyl-alpha-D-glucosamine is bound by residues 11-14, K25, Q76, 81-82, 103-105, G140, E154, N169, and N227; these read LAAG, GT, and YGD. Residue D105 participates in Mg(2+) binding. N227 contacts Mg(2+). Residues 230–250 are linker; it reads LQLSALERIYQREQADKLLLA. Positions 251-456 are N-acetyltransferase; sequence GVMLLDPARF…SGWQRPVKKK (206 aa). Residues R333 and K351 each contribute to the UDP-N-acetyl-alpha-D-glucosamine site. The active-site Proton acceptor is H363. UDP-N-acetyl-alpha-D-glucosamine is bound by residues Y366 and N377. Residues A380, 386-387, S405, A423, and R440 each bind acetyl-CoA; that span reads NY.

In the N-terminal section; belongs to the N-acetylglucosamine-1-phosphate uridyltransferase family. This sequence in the C-terminal section; belongs to the transferase hexapeptide repeat family. As to quaternary structure, homotrimer. Mg(2+) serves as cofactor.

It localises to the cytoplasm. It carries out the reaction alpha-D-glucosamine 1-phosphate + acetyl-CoA = N-acetyl-alpha-D-glucosamine 1-phosphate + CoA + H(+). The enzyme catalyses N-acetyl-alpha-D-glucosamine 1-phosphate + UTP + H(+) = UDP-N-acetyl-alpha-D-glucosamine + diphosphate. The protein operates within nucleotide-sugar biosynthesis; UDP-N-acetyl-alpha-D-glucosamine biosynthesis; N-acetyl-alpha-D-glucosamine 1-phosphate from alpha-D-glucosamine 6-phosphate (route II): step 2/2. It participates in nucleotide-sugar biosynthesis; UDP-N-acetyl-alpha-D-glucosamine biosynthesis; UDP-N-acetyl-alpha-D-glucosamine from N-acetyl-alpha-D-glucosamine 1-phosphate: step 1/1. Its pathway is bacterial outer membrane biogenesis; LPS lipid A biosynthesis. In terms of biological role, catalyzes the last two sequential reactions in the de novo biosynthetic pathway for UDP-N-acetylglucosamine (UDP-GlcNAc). The C-terminal domain catalyzes the transfer of acetyl group from acetyl coenzyme A to glucosamine-1-phosphate (GlcN-1-P) to produce N-acetylglucosamine-1-phosphate (GlcNAc-1-P), which is converted into UDP-GlcNAc by the transfer of uridine 5-monophosphate (from uridine 5-triphosphate), a reaction catalyzed by the N-terminal domain. This is Bifunctional protein GlmU from Pectobacterium atrosepticum (strain SCRI 1043 / ATCC BAA-672) (Erwinia carotovora subsp. atroseptica).